A 66-amino-acid polypeptide reads, in one-letter code: Toxin Boma6b (66 aa).

In terms of domain architecture, LCN-type CS-alpha/beta spans 2–64; that stretch reads RDAYIAQNYN…VPIKVEGKCH (63 aa). 4 disulfide bridges follow: C12-C63, C16-C36, C22-C46, and C26-C48.

Belongs to the long (4 C-C) scorpion toxin superfamily. Sodium channel inhibitor family. Alpha subfamily. As to expression, expressed by the venom gland.

It is found in the secreted. Alpha toxins bind voltage-independently at site-3 of sodium channels (Nav) and inhibit the inactivation of the activated channels, thereby blocking neuronal transmission. The polypeptide is Toxin Boma6b (Buthus occitanus mardochei (Moroccan scorpion)).